A 520-amino-acid chain; its full sequence is MRYGTLGEEINTTEVTDEFETLQTIKRTKQNIVGWYFYSFSSEPFVVSAIATYIPLLLEQFARHNGVTLEDHSVHCTADHDKCVLGLFSNRIYIDTSSFALYTFSVSVFFQTLVVITVSGVVDIWNTVTFKRNVLLLFGIIGALSTILISRIYNTQYYMLAFLCILSNSCYGVVNVVGNSLLPLFVSEYLQHNSSSLDERDNVDILTTLISGRGASIGYSSALVVQIISIFLIKKSKSSENIQVATLFVGIWWLIWQLPMSWLLQDSPISADVTPEDMDNLSIHKPKKWIFKFSNLKHGWSSLFQALKHAKLLKDVVIFLVGWFIVSDSVTTINSTAILFAKTELKMSTLSLIVLSILTMINAILGAFTIPQFISRKFQLPGEKLLIYIILWASFIPFYGILGFVFKNIGLKHKFEMFITAIWYGISLGGLSAVSRSVFSLIIPRGQESTFFSIFNVTDKGSSILGPLLIGLITDYTHDIRYSFFLLFALLILAIPIFHLLDVERGKKEASSLQKIPIAD.

The N-linked (GlcNAc...) asparagine glycan is linked to N11. The next 4 helical transmembrane spans lie at 32-52 (IVGW…AIAT), 104-124 (FSVS…VVDI), 133-153 (NVLL…SRIY), and 158-178 (YMLA…NVVG). N-linked (GlcNAc...) asparagine glycosylation occurs at N193. The next 2 helical transmembrane spans lie at 214 to 234 (GASI…FLIK) and 244 to 264 (VATL…SWLL). The N-linked (GlcNAc...) asparagine glycan is linked to N280. 6 consecutive transmembrane segments (helical) span residues 316–336 (VVIF…INST), 350–370 (LSLI…AFTI), 386–406 (LIYI…GFVF), 415–435 (FEMF…SAVS), 454–474 (IFNV…GLIT), and 483–503 (SFFL…LLDV).

This sequence belongs to the ATG22 family.

Its subcellular location is the vacuole membrane. In terms of biological role, vacuolar effluxer which mediate the efflux of amino acids resulting from autophagic degradation. The release of autophagic amino acids allows the maintenance of protein synthesis and viability during nitrogen starvation. The protein is Autophagy-related protein 22 (ATG22) of Vanderwaltozyma polyspora (strain ATCC 22028 / DSM 70294 / BCRC 21397 / CBS 2163 / NBRC 10782 / NRRL Y-8283 / UCD 57-17) (Kluyveromyces polysporus).